The following is a 499-amino-acid chain: Ubiquitin carboxyl-terminal hydrolase 16 (499 aa).

Positions 53-497 (VGLINRGNDC…YAYMLYYERV (445 aa)) constitute a USP domain. Catalysis depends on cysteine 62, which acts as the Nucleophile. The Proton acceptor role is filled by histidine 407.

This sequence belongs to the peptidase C19 family.

It carries out the reaction Thiol-dependent hydrolysis of ester, thioester, amide, peptide and isopeptide bonds formed by the C-terminal Gly of ubiquitin (a 76-residue protein attached to proteins as an intracellular targeting signal).. This is Ubiquitin carboxyl-terminal hydrolase 16 (UBP16) from Saccharomyces cerevisiae (strain ATCC 204508 / S288c) (Baker's yeast).